Reading from the N-terminus, the 321-residue chain is Cytochrome f (321 aa).

Residues 1-38 form the signal peptide; sequence MINLFLLKYKTAFSTFLKPFAYLSLILSVCFYSIQAQA. 4 residues coordinate heme: Phe39, Cys59, Cys62, and His63. A helical transmembrane segment spans residues 287–306; sequence VKGLIAFFFTVILAQILLVL.

Belongs to the cytochrome f family. As to quaternary structure, the 4 large subunits of the cytochrome b6-f complex are cytochrome b6, subunit IV (17 kDa polypeptide, petD), cytochrome f and the Rieske protein, while the 4 small subunits are PetG, PetL, PetM and PetN. The complex functions as a dimer. It depends on heme as a cofactor.

The protein localises to the plastid. It localises to the chloroplast thylakoid membrane. Component of the cytochrome b6-f complex, which mediates electron transfer between photosystem II (PSII) and photosystem I (PSI), cyclic electron flow around PSI, and state transitions. This is Cytochrome f (petA) from Guillardia theta (Cryptophyte).